The primary structure comprises 190 residues: Imidazoleglycerol-phosphate dehydratase (190 aa).

This sequence belongs to the imidazoleglycerol-phosphate dehydratase family.

The protein resides in the cytoplasm. The enzyme catalyses D-erythro-1-(imidazol-4-yl)glycerol 3-phosphate = 3-(imidazol-4-yl)-2-oxopropyl phosphate + H2O. It participates in amino-acid biosynthesis; L-histidine biosynthesis; L-histidine from 5-phospho-alpha-D-ribose 1-diphosphate: step 6/9. The chain is Imidazoleglycerol-phosphate dehydratase from Methanococcus maripaludis (strain C5 / ATCC BAA-1333).